The sequence spans 188 residues: Probable manganese efflux pump MntP (188 aa).

The next 5 helical transmembrane spans lie at 3–23 (ITAT…ASIG), 66–86 (LEWN…RMII), 106–128 (WLLV…GLAF), 143–163 (ATLI…SIIG), and 168–188 (ILGG…HFHG).

It belongs to the MntP (TC 9.B.29) family.

Its subcellular location is the cell inner membrane. Its function is as follows. Probably functions as a manganese efflux pump. The chain is Probable manganese efflux pump MntP from Escherichia coli O139:H28 (strain E24377A / ETEC).